A 317-amino-acid polypeptide reads, in one-letter code: Transaldolase (317 aa).

Lys-126 serves as the catalytic Schiff-base intermediate with substrate.

This sequence belongs to the transaldolase family. Type 1 subfamily. As to quaternary structure, homodimer.

It is found in the cytoplasm. The enzyme catalyses D-sedoheptulose 7-phosphate + D-glyceraldehyde 3-phosphate = D-erythrose 4-phosphate + beta-D-fructose 6-phosphate. Its pathway is carbohydrate degradation; pentose phosphate pathway; D-glyceraldehyde 3-phosphate and beta-D-fructose 6-phosphate from D-ribose 5-phosphate and D-xylulose 5-phosphate (non-oxidative stage): step 2/3. Transaldolase is important for the balance of metabolites in the pentose-phosphate pathway. The polypeptide is Transaldolase (Paraburkholderia xenovorans (strain LB400)).